Consider the following 163-residue polypeptide: 3-isopropylmalate dehydratase small subunit (163 aa).

Belongs to the LeuD family. LeuD type 2 subfamily. As to quaternary structure, heterodimer of LeuC and LeuD.

It carries out the reaction (2R,3S)-3-isopropylmalate = (2S)-2-isopropylmalate. It participates in amino-acid biosynthesis; L-leucine biosynthesis; L-leucine from 3-methyl-2-oxobutanoate: step 2/4. In terms of biological role, catalyzes the isomerization between 2-isopropylmalate and 3-isopropylmalate, via the formation of 2-isopropylmaleate. This chain is 3-isopropylmalate dehydratase small subunit, found in Thermococcus kodakarensis (strain ATCC BAA-918 / JCM 12380 / KOD1) (Pyrococcus kodakaraensis (strain KOD1)).